The sequence spans 100 residues: Putative septation protein SpoVG (100 aa).

Belongs to the SpoVG family.

Could be involved in septation. The sequence is that of Putative septation protein SpoVG from Staphylococcus aureus (strain JH1).